Reading from the N-terminus, the 407-residue chain is Tyrosine--tRNA ligase (407 aa).

Tyrosine 35 contributes to the L-tyrosine binding site. The 'HIGH' region signature appears at 40–49; that stretch reads PTADSLHVGH. Tyrosine 168 and glutamine 172 together coordinate L-tyrosine. The 'KMSKS' region signature appears at 228 to 232; sequence KMGKT. Position 231 (lysine 231) interacts with ATP. An S4 RNA-binding domain is found at 341-405; that stretch reads NLLVDLLVKC…RGKKNFNRIV (65 aa).

It belongs to the class-I aminoacyl-tRNA synthetase family. TyrS type 1 subfamily. In terms of assembly, homodimer.

The protein resides in the cytoplasm. It catalyses the reaction tRNA(Tyr) + L-tyrosine + ATP = L-tyrosyl-tRNA(Tyr) + AMP + diphosphate + H(+). Catalyzes the attachment of tyrosine to tRNA(Tyr) in a two-step reaction: tyrosine is first activated by ATP to form Tyr-AMP and then transferred to the acceptor end of tRNA(Tyr). This chain is Tyrosine--tRNA ligase, found in Clostridium botulinum (strain ATCC 19397 / Type A).